Consider the following 727-residue polypeptide: MTPPPPPPPPPGPDPAADPAADPCPWPGSLVVLFGATAGALGRDLGSDETDLILLVWQVVEPRSRQVGTLHKSLVRAEAAALSTQCREASGLSADSLARAEPLDKVLQQFSQLVNGDVALLGGGPYMLCTDGQQLLRQVLHPEASRKNLVLPDMFFSFYDLRREFHMQHPSTCPARDLTVATMAQGLGLETDATEDDFGVWEVKTMVAVILHLLKEPSSQLFSKPEVIKQKYETGPCSDSTVPCPYSSKADVVDSETVVRARGLPWQSSDQDVARFFKGLNVARGGVALCLNAQGRRNGEALIRFVDSEQRDLALQRHKHHMGVRYIEVYKATGEEFVKIAGGTSLEVARFLSREDQVILRLRGLPFSAGPTDVLGFLGPECPVTGGTEGLLFVRHPDGRPTGDAFALFACEELAQAALRRHKGMLGKRYIELFRSTAAEVQQVLNRYASGPLLPTLTAPLLPIPFPLAPGTGRDCVRLRGLPYTATIEDILSFLGEAAADIRPHGVHMVLNQQGRPSGDAFIQMTSAERALAAAQRCHKKVMKERYVEVVPCSTEEMSRVLMGGTLGRSGMSPPPCKLPCLSPPTYTTFQATPTLIPTETAALYPSSALLPAARVPAAPTPVAYYPGPATQLYLNYTAYYPSPPVSPTTVGYLTTPTAALASAPTSVLSQSGALVRMQGVPYTAGMKDLLSVFQAYQLPADDYTSLMPVGDPPRTVLQAPKEWVCL.

A disordered region spans residues M1–D22. Position 83 is a phosphoserine (S83). 3 RRM domains span residues T257 to S353, V358 to A438, and D475 to T555. Residue S573 is modified to Phosphoserine.

This sequence belongs to the ESRP family. As to quaternary structure, interacts with RBPMS. As to expression, epithelial cell-specific.

It is found in the nucleus. Functionally, mRNA splicing factor that regulates the formation of epithelial cell-specific isoforms. Specifically regulates the expression of FGFR2-IIIb, an epithelial cell-specific isoform of FGFR2. Also regulates the splicing of CD44, CTNND1, ENAH, 3 transcripts that undergo changes in splicing during the epithelial-to-mesenchymal transition (EMT). Acts by directly binding specific sequences in mRNAs. Binds the GU-rich sequence motifs in the ISE/ISS-3, a cis-element regulatory region present in the mRNA of FGFR2. In Homo sapiens (Human), this protein is Epithelial splicing regulatory protein 2 (ESRP2).